A 1148-amino-acid chain; its full sequence is Signal transducer and activator of transcription B (1148 aa).

Residues 1-36 show a composition bias toward low complexity; that stretch reads MEVTNNGSNNSSTIASTNPPTSPSTTSTSKSLPPLS. Disordered regions lie at residues 1–81, 93–178, 268–312, 403–425, and 453–645; these read MEVT…NNNN, SSSN…LSSS, NTNN…PSNG, KNNINNINNNSNSNNNNGNNSLL, and YDYN…KTVT. Residues 37–47 are compositionally biased toward polar residues; it reads FLNSQWENKQS. Low complexity-rich tracts occupy residues 48–81, 106–178, and 268–298; these read NNNNNSNNNNINNNNNNNNNNNNNNNNNNNNNNN, NNNN…LSSS, and NTNNNINNNNNNNNNNNNNNNNNSINNNNNN. The segment covering 466-517 has biased composition (low complexity); that stretch reads SNSSNNNSSNNNSNNNNNNNSNNNNNIIGSISPPHSSQLQQVSSPQQQQQQQ. Over residues 525 to 541 the composition is skewed to polar residues; that stretch reads SISSGSIKDLINSPNKE. The segment covering 544–557 has biased composition (low complexity); it reads SKSQYPSSLSQSSS. A compositionally biased stretch (acidic residues) spans 561–572; the sequence is MDTDVDSTDEFD. Positions 574 to 610 are enriched in low complexity; that stretch reads GSNSNNNNNNNNNNNNNNNSNNSNNKKRNNSNNNNLG. The region spanning 997-1122 is the SH2 domain; sequence WQNGFIFMFL…TIPVFKREPK (126 aa).

It belongs to the transcription factor STAT family. In terms of assembly, homodimer. Does not form heterodimers with other family members.

It localises to the nucleus. Functionally, transcription factor that regulates gene expression during development. Required for optimal cell growth. The chain is Signal transducer and activator of transcription B (dstB) from Dictyostelium discoideum (Social amoeba).